Reading from the N-terminus, the 514-residue chain is Membrane-bound lytic murein transglycosylase F (514 aa).

The signal sequence occupies residues 1–30 (MKKLKINYLFIGILTLLLAAALWPSIPWFG). The segment at 31–269 (KTENHIAAIQ…RIEEKYLGHG (239 aa)) is non-LT domain. The interval 270 to 514 (DDFDYVDTRS…LFTPQKKEEK (245 aa)) is LT domain. Residue glutamate 314 is part of the active site.

This sequence in the N-terminal section; belongs to the bacterial solute-binding protein 3 family. It in the C-terminal section; belongs to the transglycosylase Slt family.

The protein resides in the cell outer membrane. The catalysed reaction is Exolytic cleavage of the (1-&gt;4)-beta-glycosidic linkage between N-acetylmuramic acid (MurNAc) and N-acetylglucosamine (GlcNAc) residues in peptidoglycan, from either the reducing or the non-reducing ends of the peptidoglycan chains, with concomitant formation of a 1,6-anhydrobond in the MurNAc residue.. In terms of biological role, murein-degrading enzyme that degrades murein glycan strands and insoluble, high-molecular weight murein sacculi, with the concomitant formation of a 1,6-anhydromuramoyl product. Lytic transglycosylases (LTs) play an integral role in the metabolism of the peptidoglycan (PG) sacculus. Their lytic action creates space within the PG sacculus to allow for its expansion as well as for the insertion of various structures such as secretion systems and flagella. This is Membrane-bound lytic murein transglycosylase F from Salmonella choleraesuis (strain SC-B67).